The sequence spans 167 residues: CKLF-like MARVEL transmembrane domain-containing protein 7 (167 aa).

In terms of domain architecture, MARVEL spans 32-158; that stretch reads YPLTHGALFK…SLWLSYKITC (127 aa). Helical transmembrane passes span 35–55, 69–89, 102–122, and 132–152; these read THGALFKVAQMVTLLIAFICV, FEVVTMCDLIMILIFYLVHLF, LSELLHYLIGTLLLLIASIVI, and LVAGAIFGFLASFLCLASLWL.

The protein belongs to the chemokine-like factor family.

The protein resides in the membrane. The protein is CKLF-like MARVEL transmembrane domain-containing protein 7 (Cmtm7) of Mus musculus (Mouse).